The sequence spans 78 residues: Small ribosomal subunit protein bS18B (78 aa).

This sequence belongs to the bacterial ribosomal protein bS18 family. In terms of assembly, part of the 30S ribosomal subunit. Forms a tight heterodimer with protein bS6.

In terms of biological role, binds as a heterodimer with protein bS6 to the central domain of the 16S rRNA, where it helps stabilize the platform of the 30S subunit. The sequence is that of Small ribosomal subunit protein bS18B from Streptomyces griseus subsp. griseus (strain JCM 4626 / CBS 651.72 / NBRC 13350 / KCC S-0626 / ISP 5235).